The primary structure comprises 106 residues: Toxin-like structure LSTX-D7 (106 aa).

Residues 1-20 form the signal peptide; that stretch reads MMKVLVVFALLVTLISYSSS. Positions 21–41 are excised as a propeptide; the sequence is EGIDDLEADELLSLMANEQTR. 4 disulfide bridges follow: cysteine 45-cysteine 60, cysteine 52-cysteine 69, cysteine 59-cysteine 85, and cysteine 71-cysteine 83.

Belongs to the neurotoxin 19 (CSTX) family. 02 (D7) subfamily. As to expression, expressed by the venom gland.

The protein localises to the secreted. The sequence is that of Toxin-like structure LSTX-D7 from Lycosa singoriensis (Wolf spider).